Consider the following 502-residue polypeptide: Cytochrome P450 71A8 (502 aa).

Residues 16-36 form a helical membrane-spanning segment; the sequence is IISHTLAFQALVSLILLISIT. Positions 93–119 are disordered; sequence PVSSRRRPRGNHENSRSRLRRPRGSRS. Cys-447 contributes to the heme binding site.

Belongs to the cytochrome P450 family. It depends on heme as a cofactor.

Its subcellular location is the membrane. The protein is Cytochrome P450 71A8 (CYP71A8) of Mentha piperita (Peppermint).